The chain runs to 201 residues: MQQHKQLVVILETAIIAAFAMALTYIPHTTGVSAIELNYGLIPIAVLAMRRGLVPAAWAGFVWGILDLILRGIGGGSVLNPLQGILEYPIAFTLVGLMGLTFASFQKAVRGSEKVKASGYAFAGIIIGTFAKYFIHFIAGVVFWGAYAPKGTNVWVYSLIVNGGSALFSTVLTIVVVGVLLTVAPQLFVAKDGKSFSTKAA.

The next 6 helical transmembrane spans lie at 7–27 (LVVI…TYIP), 29–49 (TTGV…VLAM), 53–73 (LVPA…LRGI), 85–105 (ILEY…FASF), 124–144 (GIII…VVFW), and 170–190 (TVLT…LFVA).

Belongs to the vitamin uptake transporter (VUT/ECF) (TC 2.A.88) family. Thiamine transporter subfamily. In Lactococcus lactis subsp. cremoris (strain NZ9000) forms a stable energy-coupling factor (ECF) transporter complex probably composed of a membrane-embedded substrate-binding protein (S component), two ATP-binding proteins (A components) and a transmembrane protein (T component).

The protein localises to the cell membrane. Thiamine-binding protein that interacts with the energy-coupling factor (ECF) ABC-transporter complex. Unlike classic ABC transporters this ECF transporter provides the energy necessary to transport a number of different substrates. The substrates themselves are bound by transmembrane, not extracytoplasmic soluble proteins and transport it into cells. Binds thiamine with a dissociation constant of 0.5 nM. Upon coexpression with its energy-coupling factor (ECF) ABC-transporter complex EcfA1A2T in Lactococcus lactis subsp. cremoris (strain NZ9000) allows thiamine uptake; uptake requires both ThiT and EcfA1A2T. This Lacticaseibacillus paracasei (strain ATCC 334 / BCRC 17002 / CCUG 31169 / CIP 107868 / KCTC 3260 / NRRL B-441) (Lactobacillus paracasei) protein is Thiamine transporter ThiT (thiT).